The sequence spans 429 residues: Argininosuccinate lyase (429 aa).

This sequence belongs to the lyase 1 family. Argininosuccinate lyase subfamily.

It localises to the cytoplasm. It catalyses the reaction 2-(N(omega)-L-arginino)succinate = fumarate + L-arginine. It functions in the pathway amino-acid biosynthesis; L-arginine biosynthesis; L-arginine from L-ornithine and carbamoyl phosphate: step 3/3. This is Argininosuccinate lyase from Pyrobaculum islandicum (strain DSM 4184 / JCM 9189 / GEO3).